Consider the following 241-residue polypeptide: Sugar fermentation stimulation protein homolog (241 aa).

The protein belongs to the SfsA family.

The polypeptide is Sugar fermentation stimulation protein homolog (Jannaschia sp. (strain CCS1)).